The sequence spans 165 residues: Protein-export protein SecB (165 aa).

Belongs to the SecB family. Homotetramer, a dimer of dimers. One homotetramer interacts with 1 SecA dimer.

The protein localises to the cytoplasm. Its function is as follows. One of the proteins required for the normal export of preproteins out of the cell cytoplasm. It is a molecular chaperone that binds to a subset of precursor proteins, maintaining them in a translocation-competent state. It also specifically binds to its receptor SecA. The protein is Protein-export protein SecB of Ruegeria pomeroyi (strain ATCC 700808 / DSM 15171 / DSS-3) (Silicibacter pomeroyi).